The chain runs to 22 residues: Lantibiotic mutacin B-Ny266 (22 aa).

The segment at residues 3–7 (SWSFC) is a cross-link (lanthionine (Ser-Cys)). At Ser-5 the chain carries 2,3-didehydroalanine (Ser). Residues 8–11 (TPGC) constitute a cross-link (beta-methyllanthionine (Thr-Cys)). Position 14 is a 2,3-didehydrobutyrine (Thr-14). The lanthionine (Ser-Cys) cross-link spans 16–21 (SFNSYC). Residues 19 to 22 (SYCC) constitute a cross-link (S-(2-aminovinyl)-D-cysteine (Ser-Cys)).

Post-translationally, maturation of lantibiotics involves the enzymatic conversion of Thr, and Ser into dehydrated AA and the formation of thioether bonds with cysteine. The C-terminal lanthionine undergoes decarboxylation. This is followed by membrane translocation and cleavage of the modified precursor. It is not established whether the 2,3-didehydrobutyrine is the E- or Z-isomer.

Functionally, lanthionine-containing peptide antibiotic (lantibiotic) active on Gram-positive bacteria. The bactericidal activity of lantibiotics is based on depolarization of energized bacterial cytoplasmic membranes, initiated by the formation of aqueous transmembrane pores. This chain is Lantibiotic mutacin B-Ny266, found in Streptococcus mutans.